The following is a 365-amino-acid chain: Succinyl-diaminopimelate desuccinylase (365 aa).

Residue His-65 coordinates Zn(2+). Asp-67 is an active-site residue. Zn(2+) is bound at residue Asp-96. The active-site Proton acceptor is the Glu-126. Positions 127, 155, and 340 each coordinate Zn(2+).

Belongs to the peptidase M20A family. DapE subfamily. In terms of assembly, homodimer. It depends on Zn(2+) as a cofactor. Co(2+) serves as cofactor.

It carries out the reaction N-succinyl-(2S,6S)-2,6-diaminopimelate + H2O = (2S,6S)-2,6-diaminopimelate + succinate. It functions in the pathway amino-acid biosynthesis; L-lysine biosynthesis via DAP pathway; LL-2,6-diaminopimelate from (S)-tetrahydrodipicolinate (succinylase route): step 3/3. Catalyzes the hydrolysis of N-succinyl-L,L-diaminopimelic acid (SDAP), forming succinate and LL-2,6-diaminopimelate (DAP), an intermediate involved in the bacterial biosynthesis of lysine and meso-diaminopimelic acid, an essential component of bacterial cell walls. In Campylobacter jejuni subsp. jejuni serotype O:6 (strain 81116 / NCTC 11828), this protein is Succinyl-diaminopimelate desuccinylase.